The following is a 285-amino-acid chain: Phasyl DNA replicon protein arp (285 aa).

In terms of biological role, essential for autonomous replication of the phasyl DNA replicon. The chain is Phasyl DNA replicon protein arp (arp) from Escherichia coli.